Reading from the N-terminus, the 687-residue chain is FAD-dependent oxidoreductase domain-containing protein 2 (687 aa).

An N-terminal signal peptide occupies residues 1–22 (MSVIQLVFRLLCVLDLLLAVSA). Residues Asn29 and Asn305 are each glycosylated (N-linked (GlcNAc...) asparagine).

Belongs to the FOXRED2 family. The cofactor is FAD. In terms of processing, N-glycosylated.

Its subcellular location is the endoplasmic reticulum lumen. Functionally, probable flavoprotein which may function in endoplasmic reticulum associated degradation (ERAD). May bind non-native proteins in the endoplasmic reticulum and target them to the ubiquitination machinery for subsequent degradation. This chain is FAD-dependent oxidoreductase domain-containing protein 2 (foxred2), found in Danio rerio (Zebrafish).